Here is an 810-residue protein sequence, read N- to C-terminus: Plasminogen (810 aa).

The N-terminal stretch at 1–19 (MEHKEVVLLLLLFLKSGQG) is a signal peptide. Residues 20-98 (EPLDDYVNTK…RDVVLFEKKV (79 aa)) enclose the PAN domain. 12 disulfides stabilise this stretch: C49–C73, C53–C61, C103–C181, C124–C164, C152–C176, C185–C262, C188–C316, C206–C245, C234–C257, C275–C352, C296–C335, and C324–C347. 3 Kringle domains span residues 103–181 (CKTG…IPEC), 184–262 (ECMH…IPRC), and 275–352 (CLKG…IPSC). The span at 125-141 (QKWSSTSPHRPTFSPAT) shows a compositional bias: polar residues. Residues 125–145 (QKWSSTSPHRPTFSPATHPSE) are disordered. Residues T136, D158, and R172 each coordinate L-lysine. O-linked (GalNAc...) threonine glycosylation occurs at T365. Disulfide bonds link C377-C454, C398-C437, C426-C449, C481-C560, C502-C543, C531-C555, C567-C685, C577-C585, and C607-C623. 2 consecutive Kringle domains span residues 377-454 (CYHG…LKKC) and 481-560 (CMFG…VPQC). L-lysine-binding residues include D432 and R445. Residues 581 to 808 (VVGGCVAYPH…FVTWIEGVMR (228 aa)) enclose the Peptidase S1 domain. The residue at position 597 (S597) is a Phosphoserine. Active-site charge relay system residues include H622 and D665. The residue at position 688 (S688) is a Phosphoserine. 3 cysteine pairs are disulfide-bonded: C699–C766, C729–C745, and C756–C784. S760 serves as the catalytic Charge relay system.

The protein belongs to the peptidase S1 family. Plasminogen subfamily. As to quaternary structure, interacts with CSPG4 and AMOT. Interacts (via the Kringle domains) with HRG; the interaction tethers PLG to the cell surface and enhances its activation. Interacts (via Kringle 4 domain) with ADA; the interaction stimulates PLG activation when in complex with DPP4. Angiostatin: Interacts with ATP5F1A; the interaction inhibits most of the angiogenic effects of angiostatin. In terms of processing, in the presence of the inhibitor, the activation involves only cleavage after Arg-580, yielding two chains held together by two disulfide bonds. In the absence of the inhibitor, the activation involves additionally the removal of the activation peptide.

It localises to the secreted. The catalysed reaction is Preferential cleavage: Lys-|-Xaa &gt; Arg-|-Xaa, higher selectivity than trypsin. Converts fibrin into soluble products.. Converted into plasmin by plasminogen activators, both plasminogen and its activator being bound to fibrin. Activated with catalytic amounts of streptokinase. Functionally, plasmin dissolves the fibrin of blood clots and acts as a proteolytic factor in a variety of other processes including embryonic development, tissue remodeling, tumor invasion, and inflammation. In ovulation, weakens the walls of the Graafian follicle. It activates the urokinase-type plasminogen activator, collagenases and several complement zymogens, such as C1, C4 and C5. Cleavage of fibronectin and laminin leads to cell detachment and apoptosis. Also cleaves fibrin, thrombospondin and von Willebrand factor. Its role in tissue remodeling and tumor invasion may be modulated by CSPG4. Binds to cells. This Macaca mulatta (Rhesus macaque) protein is Plasminogen (PLG).